The following is a 175-amino-acid chain: Small ribosomal subunit protein uS9 (175 aa).

Belongs to the universal ribosomal protein uS9 family.

This Streptomyces griseus subsp. griseus (strain JCM 4626 / CBS 651.72 / NBRC 13350 / KCC S-0626 / ISP 5235) protein is Small ribosomal subunit protein uS9.